Consider the following 412-residue polypeptide: Nucleoside transporter 1 (412 aa).

Positions Met-1–Glu-21 are disordered. Over Met-1–Ser-29 the chain is Cytoplasmic. Over residues Ser-7 to Glu-21 the composition is skewed to polar residues. Residues Ile-30–Ala-50 traverse the membrane as a helical segment. Residues Leu-51–Lys-56 are Extracellular-facing. The helical transmembrane segment at Ile-57–Val-77 threads the bilayer. The Cytoplasmic portion of the chain corresponds to Asn-78–Arg-81. The chain crosses the membrane as a helical span at residues Val-82 to His-102. The Extracellular segment spans residues Gln-103 to Cys-114. A helical transmembrane segment spans residues Leu-115–Ile-135. Topologically, residues Gly-136–Ser-144 are cytoplasmic. A helical transmembrane segment spans residues Gly-145–Leu-165. Over Asp-166 to Lys-181 the chain is Extracellular. The chain crosses the membrane as a helical span at residues Leu-182–Leu-202. Topologically, residues Tyr-203–Lys-240 are cytoplasmic. A helical membrane pass occupies residues Ala-241–His-261. Over Lys-262–Thr-271 the chain is Extracellular. The chain crosses the membrane as a helical span at residues Asp-272–Asn-294. Over Phe-295–Thr-310 the chain is Cytoplasmic. A helical membrane pass occupies residues Leu-311–Ile-331. At Ser-332–Cys-343 the chain is on the extracellular side. Residues Val-344–Phe-364 traverse the membrane as a helical segment. At Val-365–Arg-382 the chain is on the cytoplasmic side. The chain crosses the membrane as a helical span at residues Ile-383–Asp-403. At Tyr-404–Asn-412 the chain is on the extracellular side.

It belongs to the SLC29A/ENT transporter (TC 2.A.57) family.

It localises to the cell membrane. The catalysed reaction is inosine(in) = inosine(out). It catalyses the reaction adenosine(in) = adenosine(out). It carries out the reaction hypoxanthine(out) = hypoxanthine(in). The enzyme catalyses guanosine(in) = guanosine(out). The catalysed reaction is guanine(out) = guanine(in). It catalyses the reaction thymidine(in) = thymidine(out). It carries out the reaction uridine(out) = uridine(in). The enzyme catalyses uracil(in) = uracil(out). The catalysed reaction is thymine(out) = thymine(in). It catalyses the reaction adenine(out) = adenine(in). It carries out the reaction cytosine(out) = cytosine(in). The enzyme catalyses xanthine(out) = xanthine(in). Its function is as follows. Nucleoside and nucleobase transporter with a broad substrate specificity. The protein is Nucleoside transporter 1 of Plasmodium berghei (strain Anka).